Here is a 204-residue protein sequence, read N- to C-terminus: dITP/XTP pyrophosphatase (204 aa).

8–13 (TKNAGK) lines the substrate pocket. Asp-70 acts as the Proton acceptor in catalysis. Asp-70 is a binding site for Mg(2+). Substrate-binding positions include Ser-71, 153–156 (FGYD), Lys-176, and 181–182 (HR).

It belongs to the HAM1 NTPase family. In terms of assembly, homodimer. Mg(2+) is required as a cofactor.

It carries out the reaction XTP + H2O = XMP + diphosphate + H(+). The catalysed reaction is dITP + H2O = dIMP + diphosphate + H(+). It catalyses the reaction ITP + H2O = IMP + diphosphate + H(+). Functionally, pyrophosphatase that catalyzes the hydrolysis of nucleoside triphosphates to their monophosphate derivatives, with a high preference for the non-canonical purine nucleotides XTP (xanthosine triphosphate), dITP (deoxyinosine triphosphate) and ITP. Seems to function as a house-cleaning enzyme that removes non-canonical purine nucleotides from the nucleotide pool, thus preventing their incorporation into DNA/RNA and avoiding chromosomal lesions. This chain is dITP/XTP pyrophosphatase, found in Geobacillus kaustophilus (strain HTA426).